The following is a 949-amino-acid chain: General transcription factor II-I repeat domain-containing protein 2B (949 aa).

2 GTF2I-like repeats span residues 98-192 and 323-417; these read QVHS…QLGG and LSSI…SNVG.

It belongs to the TFII-I family. In terms of tissue distribution, ubiquitous.

The protein resides in the nucleus. This chain is General transcription factor II-I repeat domain-containing protein 2B (GTF2IRD2B), found in Homo sapiens (Human).